Consider the following 126-residue polypeptide: Chorion class B protein M1768 (126 aa).

The tract at residues 1-17 (YGGLGYGGLGGGCGRGF) is left arm. Positions 18–86 (SGGGLPVATA…GNGAVGITRE (69 aa)) are central domain. The segment at 87–126 (GGFGYGAGYGDGYGLGFGGYGGGYGLGYGGYGGCGCSWGY) is right arm (Gly-rich tandem repeats).

Belongs to the chorion protein family.

Functionally, this protein is one of many from the eggshell of the silk moth. This Bombyx mori (Silk moth) protein is Chorion class B protein M1768.